We begin with the raw amino-acid sequence, 2167 residues long: Myosin-VIIa (2167 aa).

The Myosin motor domain maps to 63–733; sequence QGVEDMISLG…HDLFLEQERD (671 aa). 156–163 contacts ATP; that stretch reads GESGAGKT. 2 actin-binding regions span residues 612 to 634 and 712 to 726; these read LDAL…KPNE and QLGH…AHDL. 4 consecutive IQ domains span residues 736 to 758, 759 to 788, 805 to 827, and 828 to 857; these read LTRK…RFLR, LRAA…GYMR, LRGH…EYGH, and KMWA…EHKQ. A coiled-coil region spans residues 886–919; the sequence is QHYRDRLHELERREIQEQLENRRRVEVNMNIIND. Residues 1008-1245 form the MyTH4 1 domain; sequence YAKKALKHPL…PSWLELQATK (238 aa). The FERM 1 domain maps to 1250 to 1560; sequence IMLPITFMDG…YFLDGLKKRS (311 aa). The SH3 domain occupies 1558-1627; that stretch reads KRSKYVIALQ…PAETVYVLPT (70 aa). 2 positions are modified to phosphoserine: Ser1651 and Ser1654. Residues 1701–1849 enclose the MyTH4 2 domain; that stretch reads YSRDPIKAPL…PHQVEVEAIQ (149 aa). The 304-residue stretch at 1855 to 2158 folds into the FERM 2 domain; that stretch reads IFHKVYFPDD…SYISLMLTNM (304 aa). Thr2045 is modified (phosphothreonine).

It belongs to the TRAFAC class myosin-kinesin ATPase superfamily. Myosin family. In terms of assembly, homodimerizes in a two headed molecule through the formation of a coiled-coil rod. Homodimers motility is approximately 8-10 times slower than that of myosin V, and its step size is 30 nm, which is consistent with the presence of five IQ motifs in its neck region. Interacts with Cad99C (via the cytoplasmic domain). Interacts with zip and Sans. As to expression, expressed in the setae, micro- and macrochaetae on the head, thorax and wing.

It is found in the cytoplasm. The protein resides in the cell cortex. It localises to the cell projection. Its subcellular location is the microvillus. Its function is as follows. Myosins are actin-based motor molecules with ATPase activity. Unconventional myosins serve in intracellular movements: can function in cells as a single-molecule cargo transporter. A very slow and high-duty-ratio motor, may be suitable for tension maintenance of actin filaments. Their highly divergent tails are presumed to bind to membranous compartments, which would be moved relative to actin filaments. Plays a key role in the formation of cellular projections and other actin-based functions required for embryonic and larval viability. Necessary for auditory transduction: plays a role in Johnston's organ organization by functioning in scolopidial apical attachment and therefore to acoustic stimulus propagation from the antenna a2/a3 joint to transducing elements. Interaction with the myosin zip may be important for its function in scolopidial apical attachment. During oogenesis it has Cad99c-dependent and Cad99c-independent roles in regulating the shape and spacing of the follicle cell microvilli which secrete eggshell material such as the vitelline membrane. May be required for the normal expression of Cad99c in the follicle cell microvilli. The protein is Myosin-VIIa of Drosophila melanogaster (Fruit fly).